Here is a 342-residue protein sequence, read N- to C-terminus: DNA primase small subunit PriS (342 aa).

Residues D97, D99, and D276 contribute to the active site.

It belongs to the eukaryotic-type primase small subunit family. Heterodimer of a small subunit (PriS) and a large subunit (PriL). The cofactor is Mg(2+). Mn(2+) serves as cofactor.

In terms of biological role, catalytic subunit of DNA primase, an RNA polymerase that catalyzes the synthesis of short RNA molecules used as primers for DNA polymerase during DNA replication. The small subunit contains the primase catalytic core and has DNA synthesis activity on its own. Binding to the large subunit stabilizes and modulates the activity, increasing the rate of DNA synthesis while decreasing the length of the DNA fragments, and conferring RNA synthesis capability. The DNA polymerase activity may enable DNA primase to also catalyze primer extension after primer synthesis. May also play a role in DNA repair. The protein is DNA primase small subunit PriS of Thermococcus sibiricus (strain DSM 12597 / MM 739).